A 285-amino-acid polypeptide reads, in one-letter code: Bis(5'-nucleosyl)-tetraphosphatase, symmetrical (285 aa).

This sequence belongs to the Ap4A hydrolase family.

The catalysed reaction is P(1),P(4)-bis(5'-adenosyl) tetraphosphate + H2O = 2 ADP + 2 H(+). Functionally, hydrolyzes diadenosine 5',5'''-P1,P4-tetraphosphate to yield ADP. In Colwellia psychrerythraea (strain 34H / ATCC BAA-681) (Vibrio psychroerythus), this protein is Bis(5'-nucleosyl)-tetraphosphatase, symmetrical.